A 482-amino-acid polypeptide reads, in one-letter code: Probable F-box protein At1g30780 (482 aa).

The region spanning 230–280 is the F-box domain; the sequence is EIDLDSLPFDLKMVILTRLSAKSLTNFKRVSKMWSSIIGSQRFIDSFFTMS.

The protein is Probable F-box protein At1g30780 of Arabidopsis thaliana (Mouse-ear cress).